A 320-amino-acid polypeptide reads, in one-letter code: MLIVGPTAVGKSDVGIAVARRFNGEIISGDSMQVYRGMDIGTAKLKQEERGGILHHMIDILDPDEPFSVADFQRRVTTLIPEIVNRGRLPILVGGTGLYVQSIIDHYEFTEEATDLELRSQLEQEADASGLEALHRRLAEVDPISAARIHVNDRKRIIRALEVYRLTGRRQSDFHYADSVRQPKYQLAPIALTMDRQELYRRIDLRARNMIESGLVEEVKGLLKGGYAPTLPSMQAIGYKEIVGYLQGEYDLARALYLLQRDTRHFAKRQYTWFRRDTRLIWFAADAMDRERLMEGIFDVVSNALGGHVERNINDGGAFR.

5-12 lines the ATP pocket; sequence GPTAVGKS. 7 to 12 is a binding site for substrate; the sequence is TAVGKS. The interaction with substrate tRNA stretch occupies residues 30–33; sequence DSMQ.

The protein belongs to the IPP transferase family. In terms of assembly, monomer. Mg(2+) is required as a cofactor.

It catalyses the reaction adenosine(37) in tRNA + dimethylallyl diphosphate = N(6)-dimethylallyladenosine(37) in tRNA + diphosphate. Catalyzes the transfer of a dimethylallyl group onto the adenine at position 37 in tRNAs that read codons beginning with uridine, leading to the formation of N6-(dimethylallyl)adenosine (i(6)A). The protein is tRNA dimethylallyltransferase of Heliobacterium modesticaldum (strain ATCC 51547 / Ice1).